An 86-amino-acid polypeptide reads, in one-letter code: Cell division topological specificity factor (86 aa).

Belongs to the MinE family.

Functionally, prevents the cell division inhibition by proteins MinC and MinD at internal division sites while permitting inhibition at polar sites. This ensures cell division at the proper site by restricting the formation of a division septum at the midpoint of the long axis of the cell. The polypeptide is Cell division topological specificity factor (Rhizobium johnstonii (strain DSM 114642 / LMG 32736 / 3841) (Rhizobium leguminosarum bv. viciae)).